Consider the following 107-residue polypeptide: Glutaredoxin 4 (107 aa).

One can recognise a Glutaredoxin domain in the interval Ile-4–His-106. Lys-21 is a binding site for glutathione. A [2Fe-2S] cluster-binding site is contributed by Cys-29. Residues Arg-58, Phe-70, and Cys-83–Asp-84 each bind glutathione.

It belongs to the glutaredoxin family. Monothiol subfamily. Homodimer.

Its subcellular location is the cytoplasm. Functionally, monothiol glutaredoxin involved in the biogenesis of iron-sulfur clusters. The chain is Glutaredoxin 4 (grxD) from Haemophilus ducreyi (strain 35000HP / ATCC 700724).